The chain runs to 137 residues: Large-conductance mechanosensitive channel (137 aa).

Helical transmembrane passes span 15-35 (IDLAIGVIIGGAFGGLVNSIV), 38-58 (ILMPIIGFITGGIDFSNMFIQ), and 80-100 (GNFITLLINFLIIAWVLFLFV).

It belongs to the MscL family. As to quaternary structure, homopentamer.

The protein resides in the cell inner membrane. Channel that opens in response to stretch forces in the membrane lipid bilayer. May participate in the regulation of osmotic pressure changes within the cell. The polypeptide is Large-conductance mechanosensitive channel (Bartonella quintana (strain Toulouse) (Rochalimaea quintana)).